Reading from the N-terminus, the 218-residue chain is Small ribosomal subunit protein uS3 (218 aa).

One can recognise a KH type-2 domain in the interval 38 to 106 (IRKFIATKLA…RVHINIVEIK (69 aa)).

It belongs to the universal ribosomal protein uS3 family. As to quaternary structure, part of the 30S ribosomal subunit. Forms a tight complex with proteins S10 and S14.

Binds the lower part of the 30S subunit head. Binds mRNA in the 70S ribosome, positioning it for translation. This chain is Small ribosomal subunit protein uS3, found in Enterococcus faecalis (strain ATCC 700802 / V583).